Reading from the N-terminus, the 315-residue chain is Glycine--tRNA ligase alpha subunit (315 aa).

This sequence belongs to the class-II aminoacyl-tRNA synthetase family. Tetramer of two alpha and two beta subunits.

The protein localises to the cytoplasm. It catalyses the reaction tRNA(Gly) + glycine + ATP = glycyl-tRNA(Gly) + AMP + diphosphate. The chain is Glycine--tRNA ligase alpha subunit from Pseudomonas syringae pv. tomato (strain ATCC BAA-871 / DC3000).